The sequence spans 262 residues: 3-methyl-2-oxobutanoate hydroxymethyltransferase (262 aa).

Residues Asp-44 and Asp-83 each coordinate Mg(2+). 3-methyl-2-oxobutanoate-binding positions include 44-45, Asp-83, and Lys-111; that span reads DS. A Mg(2+)-binding site is contributed by Glu-113. The Proton acceptor role is filled by Glu-180.

It belongs to the PanB family. In terms of assembly, homodecamer; pentamer of dimers. Mg(2+) is required as a cofactor.

Its subcellular location is the cytoplasm. It catalyses the reaction 3-methyl-2-oxobutanoate + (6R)-5,10-methylene-5,6,7,8-tetrahydrofolate + H2O = 2-dehydropantoate + (6S)-5,6,7,8-tetrahydrofolate. It functions in the pathway cofactor biosynthesis; (R)-pantothenate biosynthesis; (R)-pantoate from 3-methyl-2-oxobutanoate: step 1/2. In terms of biological role, catalyzes the reversible reaction in which hydroxymethyl group from 5,10-methylenetetrahydrofolate is transferred onto alpha-ketoisovalerate to form ketopantoate. The polypeptide is 3-methyl-2-oxobutanoate hydroxymethyltransferase (Alcanivorax borkumensis (strain ATCC 700651 / DSM 11573 / NCIMB 13689 / SK2)).